Reading from the N-terminus, the 206-residue chain is Ribosomal RNA large subunit methyltransferase E (206 aa).

Residues glycine 61, tryptophan 63, aspartate 81, aspartate 97, and aspartate 122 each coordinate S-adenosyl-L-methionine. Lysine 162 functions as the Proton acceptor in the catalytic mechanism.

This sequence belongs to the class I-like SAM-binding methyltransferase superfamily. RNA methyltransferase RlmE family.

Its subcellular location is the cytoplasm. It carries out the reaction uridine(2552) in 23S rRNA + S-adenosyl-L-methionine = 2'-O-methyluridine(2552) in 23S rRNA + S-adenosyl-L-homocysteine + H(+). Its function is as follows. Specifically methylates the uridine in position 2552 of 23S rRNA at the 2'-O position of the ribose in the fully assembled 50S ribosomal subunit. In Neisseria meningitidis serogroup C / serotype 2a (strain ATCC 700532 / DSM 15464 / FAM18), this protein is Ribosomal RNA large subunit methyltransferase E.